A 364-amino-acid chain; its full sequence is S-adenosylmethionine:tRNA ribosyltransferase-isomerase (364 aa).

A disordered region spans residues 344 to 364 (ASDKMQETSGRGERPRFDHEI).

This sequence belongs to the QueA family. As to quaternary structure, monomer.

Its subcellular location is the cytoplasm. It carries out the reaction 7-aminomethyl-7-carbaguanosine(34) in tRNA + S-adenosyl-L-methionine = epoxyqueuosine(34) in tRNA + adenine + L-methionine + 2 H(+). It participates in tRNA modification; tRNA-queuosine biosynthesis. Transfers and isomerizes the ribose moiety from AdoMet to the 7-aminomethyl group of 7-deazaguanine (preQ1-tRNA) to give epoxyqueuosine (oQ-tRNA). The sequence is that of S-adenosylmethionine:tRNA ribosyltransferase-isomerase from Thioalkalivibrio sulfidiphilus (strain HL-EbGR7).